We begin with the raw amino-acid sequence, 66 residues long: Cold shock protein CspD (66 aa).

One can recognise a CSD domain in the interval Gly4 to Val63.

The protein resides in the cytoplasm. This Bacillus subtilis (strain 168) protein is Cold shock protein CspD (cspD).